The following is a 357-amino-acid chain: Histidinol-phosphate aminotransferase (357 aa).

The residue at position 212 (Lys212) is an N6-(pyridoxal phosphate)lysine.

Belongs to the class-II pyridoxal-phosphate-dependent aminotransferase family. Histidinol-phosphate aminotransferase subfamily. In terms of assembly, homodimer. Requires pyridoxal 5'-phosphate as cofactor.

The enzyme catalyses L-histidinol phosphate + 2-oxoglutarate = 3-(imidazol-4-yl)-2-oxopropyl phosphate + L-glutamate. The protein operates within amino-acid biosynthesis; L-histidine biosynthesis; L-histidine from 5-phospho-alpha-D-ribose 1-diphosphate: step 7/9. This chain is Histidinol-phosphate aminotransferase, found in Pectobacterium atrosepticum (strain SCRI 1043 / ATCC BAA-672) (Erwinia carotovora subsp. atroseptica).